The following is a 1949-amino-acid chain: Protein GREB1 (1949 aa).

3 disordered regions span residues 52 to 77 (EGGS…GPPN), 302 to 334 (ILSN…GGGN), and 1085 to 1210 (EALE…GQRS). Over residues 59-68 (NEEEEEEGEG) the composition is skewed to acidic residues. 2 stretches are compositionally biased toward basic and acidic residues: residues 1085–1095 (EALESDAEKLS) and 1110–1126 (TSEK…RSHD). The segment covering 1127-1147 (SASSSLSSKASGSALGGESSA) has biased composition (low complexity). Residues 1166-1178 (PAEEGRAPGEKQR) are compositionally biased toward basic and acidic residues. Residues 1868–1888 (DLLFSGLLLYLCDSFVGASFL) form a helical membrane-spanning segment.

The protein belongs to the GREB1 family. Expressed in proliferating prostatic tissue and prostate cancer.

It is found in the membrane. Functionally, may play a role in estrogen-stimulated cell proliferation. Acts as a regulator of hormone-dependent cancer growth in breast and prostate cancers. The protein is Protein GREB1 (GREB1) of Homo sapiens (Human).